Reading from the N-terminus, the 396-residue chain is Decapping and exoribonuclease protein (396 aa).

Residues 1-20 show a composition bias toward basic and acidic residues; sequence MDPRGTKRGAEKTEVAEPRN. The segment at 1 to 37 is disordered; that stretch reads MDPRGTKRGAEKTEVAEPRNKLPRPAPSLPTDPALYS. Substrate is bound by residues Arg58, Glu101, and 131–133; that span reads WRG. Glu192 contacts Mg(2+). Cys217 and Glu234 together coordinate substrate. Mg(2+) is bound by residues Glu234, Asp236, Glu253, and Leu254. Residues Lys255 and Gln280 each coordinate substrate. A Phosphothreonine modification is found at Thr392. At Ser394 the chain carries Phosphoserine.

This sequence belongs to the DXO/Dom3Z family. Mg(2+) serves as cofactor. As to expression, ubiquitously expressed.

It is found in the nucleus. It carries out the reaction a 5'-end triphospho-ribonucleoside in mRNA + H2O = a 5'-end phospho-ribonucleoside in mRNA + diphosphate + H(+). The catalysed reaction is a 5'-end NAD(+)-phospho-ribonucleoside in mRNA + H2O = a 5'-end phospho-ribonucleoside in mRNA + NAD(+) + H(+). The enzyme catalyses a 5'-end NAD(+)-phospho-ribonucleoside in snoRNA + H2O = a 5'-end phospho-ribonucleoside in snoRNA + NAD(+) + H(+). It catalyses the reaction a 5'-end (N(7)-methyl 5'-triphosphoguanosine)-ribonucleoside-ribonucleotide in mRNA + H2O = a (N(7)-methyl 5'-triphosphoguanosine)-nucleoside + a 5'-end phospho-ribonucleoside in mRNA + H(+). It carries out the reaction a 5'-end FAD-phospho-ribonucleoside in mRNA + H2O = a 5'-end phospho-ribonucleoside in mRNA + FAD + H(+). The catalysed reaction is a 5'-end CoA-ribonucleoside in mRNA + H2O = 3'-dephospho-CoA + a 5'-end phospho-ribonucleoside in mRNA + H(+). Functionally, decapping enzyme for NAD-capped RNAs: specifically hydrolyzes the nicotinamide adenine dinucleotide (NAD) cap from a subset of RNAs by removing the entire NAD moiety from the 5'-end of an NAD-capped RNA. The NAD-cap is present at the 5'-end of some RNAs and snoRNAs. In contrast to the canonical 5'-end N7 methylguanosine (m7G) cap, the NAD cap promotes mRNA decay. Preferentially acts on NAD-capped transcripts in response to environmental stress. Also acts as a non-canonical decapping enzyme that removes the entire cap structure of m7G capped or incompletely capped RNAs and mediates their subsequent degradation. Specifically degrades pre-mRNAs with a defective 5'-end m7G cap and is part of a pre-mRNA capping quality control. Has decapping activity toward incomplete 5'-end m7G cap mRNAs such as unmethylated 5'-end-capped RNA (cap0), while it has no activity toward 2'-O-ribose methylated m7G cap (cap1). In contrast to canonical decapping enzymes DCP2 and NUDT16, which cleave the cap within the triphosphate linkage, the decapping activity releases the entire cap structure GpppN and a 5'-end monophosphate RNA. Also has 5'-3' exoribonuclease activities: The 5'-end monophosphate RNA is then degraded by the 5'-3' exoribonuclease activity, enabling this enzyme to decap and degrade incompletely capped mRNAs. Also possesses RNA 5'-pyrophosphohydrolase activity by hydrolyzing the 5'-end triphosphate to release pyrophosphates. Exhibits decapping activity towards FAD-capped RNAs. Exhibits decapping activity towards dpCoA-capped RNAs in vitro. The polypeptide is Decapping and exoribonuclease protein (Homo sapiens (Human)).